A 250-amino-acid polypeptide reads, in one-letter code: Probable 2' cyclic ADP-D-ribose synthase TcpB (250 aa).

A disordered region spans residues 1–46 (MSKEKQAQSKAHKAQQAISSAKSLSTQKSKMSELERATRDGAAIGK). The interval 1 to 117 (MSKEKQAQSK…TASATMEAEE (117 aa)) is necessary and sufficient for phosphoinositide binding. A compositionally biased stretch (low complexity) spans 14–23 (AQQAISSAKS). The segment covering 30–39 (KMSELERATR) has biased composition (basic and acidic residues). Positions 117-250 (EEYDFFISHA…EIAKELHSLI (134 aa)) constitute a TIR domain. The active site involves Glu192.

In terms of assembly, homodimer; may also form oligomers. Interacts with host TIRAP. Interacts with host MYD88. Interaction with host MYD88 was not confirmed by another study. Interacts with host TLR4. Abolishes the interaction of host TIRAP with TLR4.

Its subcellular location is the secreted. The protein localises to the host cell membrane. The enzyme catalyses NAD(+) + H2O = ADP-D-ribose + nicotinamide + H(+). It carries out the reaction NAD(+) = 2'cADPR + nicotinamide + H(+). Virulence factor that interferes with host Toll-like receptor 2 (TLR2) and TLR4 signaling, resulting in the reduction of dendritic cell maturation, inhibition of pro-inflammatory cytokine secretion and impaired NF-kappa-B activation in macrophages. Interferes with host TLR4 signaling by abolishing host TLR4-TIRAP interaction (but not host TIRAP-MYD88 interaction) and its downstream signaling. Inhibits host TLR 2 induced NF-kappa-B activation and TNF (tumor necrosis factor) secretion. Binds phosphoinositide (PtdIns) via its N-terminal domain. Has NAD(+) hydrolase (NADase) activity, catalyzes cleavage of NAD(+) into ADP-D-ribose (ADPR) and nicotinamide. Also generates a cyclization variant of cyclic ADPR (cADPR), termed v-cADPR (probably 2'cADPR). This chain is Probable 2' cyclic ADP-D-ribose synthase TcpB, found in Brucella melitensis biotype 1 (strain ATCC 23456 / CCUG 17765 / NCTC 10094 / 16M).